A 675-amino-acid polypeptide reads, in one-letter code: Collagen alpha-3(IX) chain (675 aa).

A signal peptide spans 1–21 (MTVFPTLGLLFLCQLLATTSA). Disordered regions lie at residues 22–517 (QRVG…KEAS) and 542–660 (KPLS…ICDT). A triple-helical region 3 (COL3) region spans residues 25–515 (GPQGPPGPRG…TGKPGPPGKE (491 aa)). Composition is skewed to pro residues over residues 27-38 (QGPPGPRGPPGP) and 51-60 (SGLPGPPGPK). Low complexity predominate over residues 62–87 (APGKPGAAGEAGLPGLPGVDGLTGTD). The segment covering 105–125 (AGPPGPAGKGLPGPPGPPGPS) has biased composition (pro residues). Residues 126-135 (GLPGGNGFRG) show a composition bias toward gly residues. Pro residues-rich tracts occupy residues 136-155 (PPGP…PGPP) and 173-184 (LCPPGPPGPPGM). Low complexity predominate over residues 218-233 (PGSVGLQGPRGLRGLP). The Cell attachment site signature appears at 242 to 244 (RGD). Residues 301-317 (KDGRDGAPGLDGEKGDA) show a composition bias toward basic and acidic residues. Over residues 361–374 (EPGIPGDVGIPGDR) the composition is skewed to low complexity. N-linked (GlcNAc...) asparagine glycosylation is present at N479. Residues 481-508 (TAGAPGIPGHPGPMGHQGEQGVPGITGK) show a composition bias toward low complexity. Residues 516–546 (ASEQHIRELCGEMINDQIAQLAANLRKPLSP) are nonhelical region 3 (NC3). Residues 547 to 626 (GMTGRPGPAG…QGLPGVPGIS (80 aa)) form a triple-helical region 2 (COL2) region. The span at 569–582 (HPGARGPPGYRGPT) shows a compositional bias: low complexity. The Cell attachment site signature appears at 591-593 (RGD). The segment covering 613-624 (DQGPQGLPGVPG) has biased composition (low complexity). A nonhelical region 2 (NC2) region spans residues 627-631 (KNGRD). A triple-helical region 1 (COL1) region spans residues 632-658 (GAQGEPGLPGDPGTPGAVGAQGTPGIC). Positions 659 to 675 (DTSACMGAVGASTSKKS) are nonhelical region 1 (NC1).

It belongs to the fibril-associated collagens with interrupted helices (FACIT) family. As to quaternary structure, trimers composed of three different chains: alpha 1(IX), alpha 2(IX), and alpha 3(IX). Prolines at the third position of the tripeptide repeating unit (G-X-Y) are hydroxylated in some or all of the chains.

It is found in the secreted. The protein resides in the extracellular space. It localises to the extracellular matrix. Collagen type IX is a minor cartilage non-fibrillar collagen. It is associated with type II collagen fibrils. The sequence is that of Collagen alpha-3(IX) chain (COL9A3) from Gallus gallus (Chicken).